The primary structure comprises 447 residues: Pup--protein ligase 2 (447 aa).

Position 4 (Glu-4) interacts with Mg(2+). Arg-48 serves as a coordination point for ATP. Position 50 (Tyr-50) interacts with Mg(2+). Asp-52 (proton acceptor) is an active-site residue. Glu-58 contributes to the Mg(2+) binding site. Residues Thr-61 and Trp-414 each contribute to the ATP site.

Belongs to the Pup ligase/Pup deamidase family. Pup-conjugating enzyme subfamily.

The enzyme catalyses ATP + [prokaryotic ubiquitin-like protein]-L-glutamate + [protein]-L-lysine = ADP + phosphate + N(6)-([prokaryotic ubiquitin-like protein]-gamma-L-glutamyl)-[protein]-L-lysine.. The protein operates within protein degradation; proteasomal Pup-dependent pathway. Its pathway is protein modification; protein pupylation. Functionally, catalyzes the covalent attachment of the prokaryotic ubiquitin-like protein modifier Pup to the proteasomal substrate proteins, thereby targeting them for proteasomal degradation. This tagging system is termed pupylation. The ligation reaction involves the side-chain carboxylate of the C-terminal glutamate of Pup and the side-chain amino group of a substrate lysine. The chain is Pup--protein ligase 2 from Rhodococcus erythropolis (Arthrobacter picolinophilus).